The primary structure comprises 1257 residues: uncharacterized protein (1257 aa).

The segment at 1–26 (MNFSNKPNKSRKKSNRKNKKSNKSNT) is disordered. Residues 8–22 (NKSRKKSNRKNKKSN) are compositionally biased toward basic residues.

The protein localises to the virion. This is an uncharacterized protein from Acanthamoeba polyphaga mimivirus (APMV).